Consider the following 122-residue polypeptide: Large ribosomal subunit protein uL14 (122 aa).

This sequence belongs to the universal ribosomal protein uL14 family. Part of the 50S ribosomal subunit. Forms a cluster with proteins L3 and L19. In the 70S ribosome, L14 and L19 interact and together make contacts with the 16S rRNA in bridges B5 and B8.

Functionally, binds to 23S rRNA. Forms part of two intersubunit bridges in the 70S ribosome. This chain is Large ribosomal subunit protein uL14, found in Caldicellulosiruptor bescii (strain ATCC BAA-1888 / DSM 6725 / KCTC 15123 / Z-1320) (Anaerocellum thermophilum).